The sequence spans 323 residues: DNA-directed RNA polymerase subunit alpha (323 aa).

The alpha N-terminal domain (alpha-NTD) stretch occupies residues M1–N225. The interval P243–S323 is alpha C-terminal domain (alpha-CTD).

It belongs to the RNA polymerase alpha chain family. In terms of assembly, homodimer. The RNAP catalytic core consists of 2 alpha, 1 beta, 1 beta' and 1 omega subunit. When a sigma factor is associated with the core the holoenzyme is formed, which can initiate transcription.

It carries out the reaction RNA(n) + a ribonucleoside 5'-triphosphate = RNA(n+1) + diphosphate. Its function is as follows. DNA-dependent RNA polymerase catalyzes the transcription of DNA into RNA using the four ribonucleoside triphosphates as substrates. The sequence is that of DNA-directed RNA polymerase subunit alpha from Roseiflexus castenholzii (strain DSM 13941 / HLO8).